Here is a 716-residue protein sequence, read N- to C-terminus: Fatty acid oxidation complex subunit alpha (716 aa).

The interval 1-189 (MIYQSPTIQV…KVGAVDAVVA (189 aa)) is enoyl-CoA hydratase/isomerase. Asp-296 lines the substrate pocket. Positions 311-716 (KEVNNAAVLG…AANNGSYYQA (406 aa)) are 3-hydroxyacyl-CoA dehydrogenase. Residues Met-324, Asp-343, 400–402 (VVE), Lys-407, and Ser-429 each bind NAD(+). His-450 functions as the For 3-hydroxyacyl-CoA dehydrogenase activity in the catalytic mechanism. Residue Asn-453 coordinates NAD(+). Asn-500 and Tyr-660 together coordinate substrate.

In the N-terminal section; belongs to the enoyl-CoA hydratase/isomerase family. The protein in the C-terminal section; belongs to the 3-hydroxyacyl-CoA dehydrogenase family. Heterotetramer of two alpha chains (FadB) and two beta chains (FadA).

It catalyses the reaction a (3S)-3-hydroxyacyl-CoA + NAD(+) = a 3-oxoacyl-CoA + NADH + H(+). The enzyme catalyses a (3S)-3-hydroxyacyl-CoA = a (2E)-enoyl-CoA + H2O. The catalysed reaction is a 4-saturated-(3S)-3-hydroxyacyl-CoA = a (3E)-enoyl-CoA + H2O. It carries out the reaction (3S)-3-hydroxybutanoyl-CoA = (3R)-3-hydroxybutanoyl-CoA. It catalyses the reaction a (3Z)-enoyl-CoA = a 4-saturated (2E)-enoyl-CoA. The enzyme catalyses a (3E)-enoyl-CoA = a 4-saturated (2E)-enoyl-CoA. The protein operates within lipid metabolism; fatty acid beta-oxidation. Functionally, involved in the aerobic and anaerobic degradation of long-chain fatty acids via beta-oxidation cycle. Catalyzes the formation of 3-oxoacyl-CoA from enoyl-CoA via L-3-hydroxyacyl-CoA. It can also use D-3-hydroxyacyl-CoA and cis-3-enoyl-CoA as substrate. The chain is Fatty acid oxidation complex subunit alpha from Shewanella baltica (strain OS155 / ATCC BAA-1091).